The chain runs to 1442 residues: DNA polymerase III PolC-type (1442 aa).

Residues 426 to 582 (YVVFDVETTG…YDTEATAYIF (157 aa)) enclose the Exonuclease domain.

It belongs to the DNA polymerase type-C family. PolC subfamily.

Its subcellular location is the cytoplasm. The enzyme catalyses DNA(n) + a 2'-deoxyribonucleoside 5'-triphosphate = DNA(n+1) + diphosphate. In terms of biological role, required for replicative DNA synthesis. This DNA polymerase also exhibits 3' to 5' exonuclease activity. This chain is DNA polymerase III PolC-type, found in Staphylococcus epidermidis (strain ATCC 12228 / FDA PCI 1200).